The primary structure comprises 385 residues: A-type ATP synthase subunit C (385 aa).

Belongs to the V-ATPase V0D/AC39 subunit family. Has multiple subunits with at least A(3), B(3), C, D, E, F, H, I and proteolipid K(x).

The protein localises to the cell membrane. Its function is as follows. Component of the A-type ATP synthase that produces ATP from ADP in the presence of a proton gradient across the membrane. This Methanothermobacter thermautotrophicus (strain ATCC 29096 / DSM 1053 / JCM 10044 / NBRC 100330 / Delta H) (Methanobacterium thermoautotrophicum) protein is A-type ATP synthase subunit C.